Reading from the N-terminus, the 155-residue chain is Ribosomal RNA large subunit methyltransferase H (155 aa).

S-adenosyl-L-methionine-binding positions include leucine 72, glycine 103, and 122-127 (LSPLTL).

Belongs to the RNA methyltransferase RlmH family. Homodimer.

Its subcellular location is the cytoplasm. It carries out the reaction pseudouridine(1915) in 23S rRNA + S-adenosyl-L-methionine = N(3)-methylpseudouridine(1915) in 23S rRNA + S-adenosyl-L-homocysteine + H(+). Functionally, specifically methylates the pseudouridine at position 1915 (m3Psi1915) in 23S rRNA. The chain is Ribosomal RNA large subunit methyltransferase H from Haemophilus influenzae (strain PittGG).